We begin with the raw amino-acid sequence, 206 residues long: RNA-free ribonuclease P (206 aa).

Residues 187-206 (NLAGDDPGHAPPCGPDQPAG) form a disordered region. Pro residues predominate over residues 195 to 206 (HAPPCGPDQPAG).

Belongs to the HARP family.

It catalyses the reaction Endonucleolytic cleavage of RNA, removing 5'-extranucleotides from tRNA precursor.. RNA-free RNase P that catalyzes the removal of the 5'-leader sequence from pre-tRNA to produce the mature 5'-terminus. This is RNA-free ribonuclease P from Halorhodospira halophila (strain DSM 244 / SL1) (Ectothiorhodospira halophila (strain DSM 244 / SL1)).